Consider the following 148-residue polypeptide: FAD synthase (148 aa).

ATP contacts are provided by residues 14-15 (VF), 19-22 (HAGH), and aspartate 100.

This sequence belongs to the archaeal FAD synthase family. Homodimer. A divalent metal cation serves as cofactor.

It catalyses the reaction FMN + ATP + H(+) = FAD + diphosphate. It participates in cofactor biosynthesis; FAD biosynthesis; FAD from FMN: step 1/1. Functionally, catalyzes the transfer of the AMP portion of ATP to flavin mononucleotide (FMN) to produce flavin adenine dinucleotide (FAD) coenzyme. The protein is FAD synthase of Pyrococcus horikoshii (strain ATCC 700860 / DSM 12428 / JCM 9974 / NBRC 100139 / OT-3).